Reading from the N-terminus, the 535-residue chain is Cytochrome c oxidase subunit 1 (535 aa).

The chain crosses the membrane as a helical span at residues 17 to 37; the sequence is ILYFIFAIFSGVIGSTMSLII. 3 residues coordinate Ca(2+): Glu40, Ala43, and Gly45. A run of 6 helical transmembrane segments spans residues 58–78, 104–124, 147–167, 184–204, 236–256, and 268–288; these read VLVVGHALLMIFFLVMPGLVG, FWLLPPALVCLVASTLIESWA, LGIFAIHLTSISSLLGAINFI, PLFVWAIIITAVMLLLSLPVL, LFWFFGHPEVYILIVPGFGII, and VFGEISMVYAMASIAFLGFLV. A Fe(II)-heme a-binding site is contributed by His63. His242 contacts Cu cation. Positions 242–246 form a cross-link, 1'-histidyl-3'-tyrosine (His-Tyr); the sequence is HPEVY. Tyr246 is a binding site for O2. Residues His291 and His292 each coordinate Cu cation. 2 consecutive transmembrane segments (helical) span residues 311–331 and 339–359; these read MVIAVPTGIKIFSWLATLYGG and MLYAIAFLFLFTIGGLTGVAL. Residues His369 and Asp370 each contribute to the Mg(2+) site. A run of 2 helical transmembrane segments spans residues 373–393 and 413–433; these read YVVGHFHYVLSMGAIFSLFAG and IQFWLIFVGANVIFMPMHFLG. His377 serves as a coordination point for heme a3. His379 is a binding site for Fe(II)-heme a. Pro442 is a binding site for Ca(2+). Residues 453-473 form a helical membrane-spanning segment; it reads YVSSIGSVIAIISLALFIYII.

The protein belongs to the heme-copper respiratory oxidase family. As to quaternary structure, component of the cytochrome c oxidase (complex IV, CIV), a multisubunit enzyme composed of a catalytic core of 3 subunits and several supernumerary subunits. The complex exists as a monomer or a dimer and forms supercomplexes (SCs) in the inner mitochondrial membrane with ubiquinol-cytochrome c oxidoreductase (cytochrome b-c1 complex, complex III, CIII). Heme is required as a cofactor. Requires Cu cation as cofactor.

Its subcellular location is the mitochondrion inner membrane. It carries out the reaction 4 Fe(II)-[cytochrome c] + O2 + 8 H(+)(in) = 4 Fe(III)-[cytochrome c] + 2 H2O + 4 H(+)(out). The protein operates within energy metabolism; oxidative phosphorylation. Functionally, component of the cytochrome c oxidase, the last enzyme in the mitochondrial electron transport chain which drives oxidative phosphorylation. The respiratory chain contains 3 multisubunit complexes succinate dehydrogenase (complex II, CII), ubiquinol-cytochrome c oxidoreductase (cytochrome b-c1 complex, complex III, CIII) and cytochrome c oxidase (complex IV, CIV), that cooperate to transfer electrons derived from NADH and succinate to molecular oxygen, creating an electrochemical gradient over the inner membrane that drives transmembrane transport and the ATP synthase. Cytochrome c oxidase is the component of the respiratory chain that catalyzes the reduction of oxygen to water. Electrons originating from reduced cytochrome c in the intermembrane space (IMS) are transferred via the dinuclear copper A center (CU(A)) of subunit 2 and heme A of subunit 1 to the active site in subunit 1, a binuclear center (BNC) formed by heme A3 and copper B (CU(B)). The BNC reduces molecular oxygen to 2 water molecules using 4 electrons from cytochrome c in the IMS and 4 protons from the mitochondrial matrix. This chain is Cytochrome c oxidase subunit 1 (COX1), found in Wickerhamomyces canadensis (Yeast).